The chain runs to 498 residues: 3-octaprenyl-4-hydroxybenzoate carboxy-lyase (498 aa).

Asn175 serves as a coordination point for Mn(2+). Residues 178 to 180, 192 to 194, and 197 to 198 contribute to the prenylated FMN site; these read IYR, RWL, and RG. Residue Glu241 coordinates Mn(2+). Catalysis depends on Asp290, which acts as the Proton donor.

It belongs to the UbiD family. In terms of assembly, homohexamer. Prenylated FMN serves as cofactor. Requires Mn(2+) as cofactor.

The protein localises to the cell membrane. It carries out the reaction a 4-hydroxy-3-(all-trans-polyprenyl)benzoate + H(+) = a 2-(all-trans-polyprenyl)phenol + CO2. Its pathway is cofactor biosynthesis; ubiquinone biosynthesis. Functionally, catalyzes the decarboxylation of 3-octaprenyl-4-hydroxy benzoate to 2-octaprenylphenol, an intermediate step in ubiquinone biosynthesis. The chain is 3-octaprenyl-4-hydroxybenzoate carboxy-lyase from Yersinia pseudotuberculosis serotype I (strain IP32953).